The sequence spans 525 residues: GMP synthase [glutamine-hydrolyzing] (525 aa).

Residues 9–207 (RILILDFGSQ…VLDICGCAAL (199 aa)) enclose the Glutamine amidotransferase type-1 domain. Residue C86 is the Nucleophile of the active site. Active-site residues include H181 and E183. The 193-residue stretch at 208–400 (WTPSNIVDDA…LGLPYDMVYR (193 aa)) folds into the GMPS ATP-PPase domain. 235-241 (SGGVDSS) is a binding site for ATP.

As to quaternary structure, homodimer.

The catalysed reaction is XMP + L-glutamine + ATP + H2O = GMP + L-glutamate + AMP + diphosphate + 2 H(+). It participates in purine metabolism; GMP biosynthesis; GMP from XMP (L-Gln route): step 1/1. Catalyzes the synthesis of GMP from XMP. The protein is GMP synthase [glutamine-hydrolyzing] of Pseudomonas aeruginosa (strain LESB58).